A 32-amino-acid polypeptide reads, in one-letter code: MAKEIFTVAGVMWALVLTGLSVGFGLLKIQGE.

The helical transmembrane segment at 5–25 (IFTVAGVMWALVLTGLSVGFG) threads the bilayer.

Belongs to the PetM family. In terms of assembly, the 4 large subunits of the cytochrome b6-f complex are cytochrome b6, subunit IV (17 kDa polypeptide, PetD), cytochrome f and the Rieske protein, while the 4 small subunits are PetG, PetL, PetM and PetN. The complex functions as a dimer.

It localises to the plastid. The protein localises to the chloroplast thylakoid membrane. Its function is as follows. Component of the cytochrome b6-f complex, which mediates electron transfer between photosystem II (PSII) and photosystem I (PSI), cyclic electron flow around PSI, and state transitions. The polypeptide is Cytochrome b6-f complex subunit 7 (Emiliania huxleyi (Coccolithophore)).